Consider the following 162-residue polypeptide: UPF0260 protein Atu0932 (162 aa).

This sequence belongs to the UPF0260 family.

This chain is UPF0260 protein Atu0932, found in Agrobacterium fabrum (strain C58 / ATCC 33970) (Agrobacterium tumefaciens (strain C58)).